The following is a 201-amino-acid chain: MGLISGKVCVFIFVFALVAEFSFGNVEVNDDKHFFHKPRPFLHKPRPFLHKHGIYKKGFGKGLGGGGGLGGGGGLGGGGGLGGGGGLGGGGGLGGGGGLGGGSGLGGGGGLGGGSGLGGGGGLGGGGGGGLGGGGGLGGGAGGGYGGGAGGGLGGGGGIGGGGGFGGGGGGGFGGGAGGGFGKGIGGGGGLGGGYVGGGHH.

The signal sequence occupies residues 1–24 (MGLISGKVCVFIFVFALVAEFSFG). Repeat copies occupy residues 62 to 67 (GLGGGG), 68 to 73 (GLGGGG), 74 to 79 (GLGGGG), 80 to 85 (GLGGGG), 86 to 91 (GLGGGG), 92 to 97 (GLGGGG), 98 to 103 (GLGGGS), 104 to 109 (GLGGGG), 110 to 115 (GLGGGS), 116 to 121 (GLGGGG), 122 to 129 (GLGGGGGG), 130 to 135 (GLGGGG), 136 to 143 (GLGGGAGG), 144 to 151 (GYGGGAGG), 152 to 157 (GLGGGG), 158 to 163 (GIGGGG), 164 to 169 (GFGGGG), 170 to 175 (GGGFGG), 176 to 182 (GAGGGFG), 184 to 189 (GIGGGG), and 190 to 194 (GLGGG). Residues 62-194 (GLGGGGGLGG…IGGGGGLGGG (133 aa)) form a 21 X 6 AA approximate tandem repeats of G-L-G-G-G-G, Gly-rich region.

The sequence is that of Glycine-rich protein 23 from Arabidopsis thaliana (Mouse-ear cress).